The following is a 430-amino-acid chain: Trigger factor (430 aa).

Residues 163-248 (GNIAIIDFKG…IKDIKVKELP (86 aa)) form the PPIase FKBP-type domain.

The protein belongs to the FKBP-type PPIase family. Tig subfamily.

Its subcellular location is the cytoplasm. The catalysed reaction is [protein]-peptidylproline (omega=180) = [protein]-peptidylproline (omega=0). In terms of biological role, involved in protein export. Acts as a chaperone by maintaining the newly synthesized protein in an open conformation. Functions as a peptidyl-prolyl cis-trans isomerase. The sequence is that of Trigger factor from Clostridium botulinum (strain ATCC 19397 / Type A).